Consider the following 83-residue polypeptide: Exodeoxyribonuclease 7 small subunit (83 aa).

Belongs to the XseB family. Heterooligomer composed of large and small subunits.

The protein localises to the cytoplasm. It carries out the reaction Exonucleolytic cleavage in either 5'- to 3'- or 3'- to 5'-direction to yield nucleoside 5'-phosphates.. Its function is as follows. Bidirectionally degrades single-stranded DNA into large acid-insoluble oligonucleotides, which are then degraded further into small acid-soluble oligonucleotides. This Afipia carboxidovorans (strain ATCC 49405 / DSM 1227 / KCTC 32145 / OM5) (Oligotropha carboxidovorans) protein is Exodeoxyribonuclease 7 small subunit.